Consider the following 257-residue polypeptide: 5'-nucleotidase SurE (257 aa).

D8, D9, S40, and N92 together coordinate a divalent metal cation.

Belongs to the SurE nucleotidase family. A divalent metal cation serves as cofactor.

It localises to the cytoplasm. The catalysed reaction is a ribonucleoside 5'-phosphate + H2O = a ribonucleoside + phosphate. Functionally, nucleotidase that shows phosphatase activity on nucleoside 5'-monophosphates. The sequence is that of 5'-nucleotidase SurE from Rhizobium rhizogenes (strain K84 / ATCC BAA-868) (Agrobacterium radiobacter).